Here is a 386-residue protein sequence, read N- to C-terminus: Coproporphyrinogen-III oxidase 1, chloroplastic (386 aa).

Residues 1–48 (MASHSSTLLSSPTFAPFSSHRLHYSPNPSTLRFSRPIRNKPNLALRCS) constitute a chloroplast transit peptide. Residues 125-134 (VLQDGNVFEK) form an important for dimerization region. A substrate-binding site is contributed by serine 174. Histidine 188 acts as the Proton donor in catalysis. Substrate-binding positions include 190 to 192 (NYR) and 344 to 349 (GGRIES). Positions 326–361 (YVEFNLVYDRGTTFGLKTGGRIESILVSLPLSARWE) are important for dimerization.

Belongs to the aerobic coproporphyrinogen-III oxidase family. Homodimer. As to expression, expressed in cotyledons, leaves and roots.

It is found in the plastid. Its subcellular location is the chloroplast. It carries out the reaction coproporphyrinogen III + O2 + 2 H(+) = protoporphyrinogen IX + 2 CO2 + 2 H2O. It participates in porphyrin-containing compound metabolism; protoporphyrin-IX biosynthesis; protoporphyrinogen-IX from coproporphyrinogen-III (O2 route): step 1/1. It functions in the pathway porphyrin-containing compound metabolism; chlorophyll biosynthesis. Functionally, key enzyme in heme biosynthesis. Catalyzes the oxidative decarboxylation of propionic acid side chains of rings A and B of coproporphyrinogen III. The polypeptide is Coproporphyrinogen-III oxidase 1, chloroplastic (CPX1) (Arabidopsis thaliana (Mouse-ear cress)).